A 486-amino-acid chain; its full sequence is MTDQNLAIVVLAAGQGTRMKSATPKLLHPLGGIPVIAHVLETARALEAAEVVAVVRHERDRLAEVIGVELPEAVIVDQDEVPGTGRAVEQAVAALPADFSGDVLVVNGDVPLLDAGTLRELIAAHRAGGSAATILSAFPAVAAGYGRIVRTSTGRLDRIVEHKDATEAERAIGEINAGIYVFGAAALRDKLAAITTDNAQGEKYITDVIGLLRESGFDVDALPVSDSWLVDGINDRAQLSEAAAKLNALTVRAWQLAGVTVQDPATTWIDVRVRLAPDVTLLPGTQLRGATAVETGATIGPDTTLLDTEVGAGATVKRTDATLAVIGAAATVGPFAYLRPGTVLGADGKIGTFVETKNAVIGAGAKLAHFNYVGDAEVGEKSNLGAGVITANYDGVNKHRTEIGSHVRVATNTVFVAPVRMGDGAYTGAGTVVRKDVPAGSLAVTVAPQRNIEGWVAQRRPGTDAARAAQRNGAAEASNAAEESGE.

The tract at residues 1–236 (MTDQNLAIVV…SWLVDGINDR (236 aa)) is pyrophosphorylase. UDP-N-acetyl-alpha-D-glucosamine contacts are provided by residues 11 to 14 (LAAG), Lys-25, Gln-78, and 83 to 84 (GT). Asp-109 lines the Mg(2+) pocket. The UDP-N-acetyl-alpha-D-glucosamine site is built by Gly-146, Glu-161, Asn-176, and Asn-234. Asn-234 is a binding site for Mg(2+). Residues 237–257 (AQLSEAAAKLNALTVRAWQLA) form a linker region. Residues 258-486 (GVTVQDPATT…ASNAAEESGE (229 aa)) are N-acetyltransferase. UDP-N-acetyl-alpha-D-glucosamine contacts are provided by Arg-339 and Lys-357. His-369 (proton acceptor) is an active-site residue. Tyr-372 and Asn-383 together coordinate UDP-N-acetyl-alpha-D-glucosamine. Acetyl-CoA is bound by residues Ala-386, 392-393 (NY), and Ala-429. Positions 459–486 (RRPGTDAARAAQRNGAAEASNAAEESGE) are disordered. Residues 465–486 (AARAAQRNGAAEASNAAEESGE) show a composition bias toward low complexity.

The protein in the N-terminal section; belongs to the N-acetylglucosamine-1-phosphate uridyltransferase family. It in the C-terminal section; belongs to the transferase hexapeptide repeat family. In terms of assembly, homotrimer. It depends on Mg(2+) as a cofactor.

The protein resides in the cytoplasm. It carries out the reaction alpha-D-glucosamine 1-phosphate + acetyl-CoA = N-acetyl-alpha-D-glucosamine 1-phosphate + CoA + H(+). The enzyme catalyses N-acetyl-alpha-D-glucosamine 1-phosphate + UTP + H(+) = UDP-N-acetyl-alpha-D-glucosamine + diphosphate. It participates in nucleotide-sugar biosynthesis; UDP-N-acetyl-alpha-D-glucosamine biosynthesis; N-acetyl-alpha-D-glucosamine 1-phosphate from alpha-D-glucosamine 6-phosphate (route II): step 2/2. The protein operates within nucleotide-sugar biosynthesis; UDP-N-acetyl-alpha-D-glucosamine biosynthesis; UDP-N-acetyl-alpha-D-glucosamine from N-acetyl-alpha-D-glucosamine 1-phosphate: step 1/1. Its pathway is bacterial outer membrane biogenesis; LPS lipid A biosynthesis. Its function is as follows. Catalyzes the last two sequential reactions in the de novo biosynthetic pathway for UDP-N-acetylglucosamine (UDP-GlcNAc). The C-terminal domain catalyzes the transfer of acetyl group from acetyl coenzyme A to glucosamine-1-phosphate (GlcN-1-P) to produce N-acetylglucosamine-1-phosphate (GlcNAc-1-P), which is converted into UDP-GlcNAc by the transfer of uridine 5-monophosphate (from uridine 5-triphosphate), a reaction catalyzed by the N-terminal domain. This Leifsonia xyli subsp. xyli (strain CTCB07) protein is Bifunctional protein GlmU.